The sequence spans 131 residues: Small ribosomal subunit protein uS8 (131 aa).

It belongs to the universal ribosomal protein uS8 family. Part of the 30S ribosomal subunit. Contacts proteins S5 and S12.

Its function is as follows. One of the primary rRNA binding proteins, it binds directly to 16S rRNA central domain where it helps coordinate assembly of the platform of the 30S subunit. In Sulfurimonas denitrificans (strain ATCC 33889 / DSM 1251) (Thiomicrospira denitrificans (strain ATCC 33889 / DSM 1251)), this protein is Small ribosomal subunit protein uS8.